A 431-amino-acid polypeptide reads, in one-letter code: Na(+)-translocating NADH-quinone reductase subunit F (431 aa).

The helical transmembrane segment at 10–30 (IFVASAAFCSLGLILVAVILL) threads the bilayer. Residues 41–133 (CKLKINNDDS…DLCLEVEERY (93 aa)) form the 2Fe-2S ferredoxin-type domain. Residues cysteine 76, cysteine 82, cysteine 85, and cysteine 117 each contribute to the [2Fe-2S] cluster site. The FAD-binding FR-type domain occupies 136-286 (ASSWEGTVVS…SGPYGESFMK (151 aa)).

It belongs to the NqrF family. Composed of six subunits; NqrA, NqrB, NqrC, NqrD, NqrE and NqrF. [2Fe-2S] cluster serves as cofactor. Requires FAD as cofactor.

It localises to the cell inner membrane. The catalysed reaction is a ubiquinone + n Na(+)(in) + NADH + H(+) = a ubiquinol + n Na(+)(out) + NAD(+). Functionally, NQR complex catalyzes the reduction of ubiquinone-1 to ubiquinol by two successive reactions, coupled with the transport of Na(+) ions from the cytoplasm to the periplasm. The first step is catalyzed by NqrF, which accepts electrons from NADH and reduces ubiquinone-1 to ubisemiquinone by a one-electron transfer pathway. This Chlamydia trachomatis serovar A (strain ATCC VR-571B / DSM 19440 / HAR-13) protein is Na(+)-translocating NADH-quinone reductase subunit F.